The primary structure comprises 126 residues: Small ribosomal subunit protein uS12 (126 aa).

The interval 1 to 28 is disordered; it reads MPTIQQLIRSERSKVQKKTKSPALKQCP. Position 89 is a 3-methylthioaspartic acid (D89). Residues 104–126 are disordered; sequence ATGVKDRKQGRSKYGTKREKAKK. Residues 113 to 126 show a composition bias toward basic residues; the sequence is GRSKYGTKREKAKK.

The protein belongs to the universal ribosomal protein uS12 family. Part of the 30S ribosomal subunit. Contacts proteins S8 and S17. May interact with IF1 in the 30S initiation complex.

In terms of biological role, with S4 and S5 plays an important role in translational accuracy. Interacts with and stabilizes bases of the 16S rRNA that are involved in tRNA selection in the A site and with the mRNA backbone. Located at the interface of the 30S and 50S subunits, it traverses the body of the 30S subunit contacting proteins on the other side and probably holding the rRNA structure together. The combined cluster of proteins S8, S12 and S17 appears to hold together the shoulder and platform of the 30S subunit. The protein is Small ribosomal subunit protein uS12 of Synechocystis sp. (strain ATCC 27184 / PCC 6803 / Kazusa).